The chain runs to 517 residues: Benzoate 4-monooxygenase bphA (517 aa).

Residues 4–24 (LLLSPYGAYLGLALLVLYYLL) traverse the membrane as a helical segment. Asn-282 and Asn-325 each carry an N-linked (GlcNAc...) asparagine glycan. Heme is bound at residue Cys-461.

Belongs to the cytochrome P450 family. The cofactor is heme.

The protein resides in the membrane. The enzyme catalyses benzoate + reduced [NADPH--hemoprotein reductase] + O2 = 4-hydroxybenzoate + oxidized [NADPH--hemoprotein reductase] + H2O + H(+). Functionally, cytochrome P450 monooxygenase; part of the benzoic acid degradation pathway also known as the protocatechuic acid pathway. Benzoic acid debradation begins with the conversion of benzoic acid into 4-hydroxybenzoic acid through hydroxylation by the benzoate-4-monooxygenase bphA, and its partner NADPH-cytochrome P450 reductase cprA which act as a mediator in electron donation from NADPH. 4-Hydroxybenzoic acid is then converted into 3,4-dihydroxybenzoic acid (also called protocatechuic acid) by the p-hydroxybenzoate-m-hydroxylase phhA. Protocatechuic acid is converted into 3-carboxy-cis,cis-muconic acid by the intradiol ring-cleavage dioxygenase prcA, which is further metabolized through the 3-oxoadipate pathway to finally enter the tricarboxylic acid cycle (TCA). Responsible for cytochrome P450 dependent benzoate hydroxylation in microsomes; requires cprA as the mediator in electron donation from NADPH. In Aspergillus niger, this protein is Benzoate 4-monooxygenase bphA.